The primary structure comprises 440 residues: UDP-N-acetylmuramoylalanine--D-glutamate ligase (440 aa).

115-121 (GSNGKST) provides a ligand contact to ATP.

The protein belongs to the MurCDEF family.

The protein localises to the cytoplasm. The catalysed reaction is UDP-N-acetyl-alpha-D-muramoyl-L-alanine + D-glutamate + ATP = UDP-N-acetyl-alpha-D-muramoyl-L-alanyl-D-glutamate + ADP + phosphate + H(+). Its pathway is cell wall biogenesis; peptidoglycan biosynthesis. Functionally, cell wall formation. Catalyzes the addition of glutamate to the nucleotide precursor UDP-N-acetylmuramoyl-L-alanine (UMA). The chain is UDP-N-acetylmuramoylalanine--D-glutamate ligase from Vibrio cholerae serotype O1 (strain ATCC 39315 / El Tor Inaba N16961).